A 117-amino-acid polypeptide reads, in one-letter code: Aspartate 1-decarboxylase (117 aa).

Ser-25 (schiff-base intermediate with substrate; via pyruvic acid) is an active-site residue. The residue at position 25 (Ser-25) is a Pyruvic acid (Ser). Residue Thr-57 participates in substrate binding. The active-site Proton donor is the Tyr-58. Residue 72–74 (GAA) participates in substrate binding.

The protein belongs to the PanD family. Heterooctamer of four alpha and four beta subunits. Requires pyruvate as cofactor. Post-translationally, is synthesized initially as an inactive proenzyme, which is activated by self-cleavage at a specific serine bond to produce a beta-subunit with a hydroxyl group at its C-terminus and an alpha-subunit with a pyruvoyl group at its N-terminus.

It is found in the cytoplasm. It catalyses the reaction L-aspartate + H(+) = beta-alanine + CO2. It participates in cofactor biosynthesis; (R)-pantothenate biosynthesis; beta-alanine from L-aspartate: step 1/1. In terms of biological role, catalyzes the pyruvoyl-dependent decarboxylation of aspartate to produce beta-alanine. This chain is Aspartate 1-decarboxylase, found in Helicobacter pylori (strain ATCC 700392 / 26695) (Campylobacter pylori).